We begin with the raw amino-acid sequence, 276 residues long: Dermonecrotic toxin LsaSicTox-alphaIB2i (276 aa).

His5 is an active-site residue. Residues Glu25 and Asp27 each contribute to the Mg(2+) site. His41 (nucleophile) is an active-site residue. Cystine bridges form between Cys45/Cys51 and Cys47/Cys190. Residue Asp85 coordinates Mg(2+). 2 N-linked (GlcNAc...) asparagine glycosylation sites follow: Asn129 and Asn253.

It belongs to the arthropod phospholipase D family. Class II subfamily. Mg(2+) is required as a cofactor. In terms of tissue distribution, expressed by the venom gland.

It is found in the secreted. It carries out the reaction an N-(acyl)-sphingosylphosphocholine = an N-(acyl)-sphingosyl-1,3-cyclic phosphate + choline. The enzyme catalyses an N-(acyl)-sphingosylphosphoethanolamine = an N-(acyl)-sphingosyl-1,3-cyclic phosphate + ethanolamine. It catalyses the reaction a 1-acyl-sn-glycero-3-phosphocholine = a 1-acyl-sn-glycero-2,3-cyclic phosphate + choline. The catalysed reaction is a 1-acyl-sn-glycero-3-phosphoethanolamine = a 1-acyl-sn-glycero-2,3-cyclic phosphate + ethanolamine. Its function is as follows. Dermonecrotic toxins cleave the phosphodiester linkage between the phosphate and headgroup of certain phospholipids (sphingolipid and lysolipid substrates), forming an alcohol (often choline) and a cyclic phosphate. This toxin acts on sphingomyelin (SM). It may also act on ceramide phosphoethanolamine (CPE), lysophosphatidylcholine (LPC) and lysophosphatidylethanolamine (LPE), but not on lysophosphatidylserine (LPS), and lysophosphatidylglycerol (LPG). It acts by transphosphatidylation, releasing exclusively cyclic phosphate products as second products. Induces dermonecrosis, hemolysis, increased vascular permeability, edema, inflammatory response, and platelet aggregation. The polypeptide is Dermonecrotic toxin LsaSicTox-alphaIB2i (Loxosceles sabina (Tucson recluse spider)).